The chain runs to 142 residues: Universal stress protein G (142 aa).

The protein belongs to the universal stress protein A family.

The sequence is that of Universal stress protein G (uspG) from Salmonella typhi.